A 167-amino-acid polypeptide reads, in one-letter code: Ion-translocating oxidoreductase complex subunit B (167 aa).

The tract at residues 1–22 is hydrophobic; sequence MITLIIFSFLSFLLGIILSFTA. One can recognise a 4Fe-4S domain in the interval 28–87; it reads QEDPIVAIVNELLPQSQCAQCGYSGCYPYAKAIVENSEKINKCIPGGTDLISAISSVLSI. [4Fe-4S] cluster-binding residues include Cys-45, Cys-48, Cys-53, Cys-70, Cys-113, Cys-116, Cys-119, Cys-123, Cys-143, Cys-146, Cys-149, and Cys-153. 4Fe-4S ferredoxin-type domains are found at residues 104-133 and 134-163; these read NTVLINESNCVGCSKCASFCPVDAIVGAPN and FIHTVLQEFCTGCNICLLHCPTNCIEIKKE.

It belongs to the 4Fe4S bacterial-type ferredoxin family. RnfB subfamily. As to quaternary structure, the complex is composed of six subunits: RnfA, RnfB, RnfC, RnfD, RnfE and RnfG. The cofactor is [4Fe-4S] cluster.

The protein localises to the cell inner membrane. Its function is as follows. Part of a membrane-bound complex that couples electron transfer with translocation of ions across the membrane. In Buchnera aphidicola subsp. Acyrthosiphon pisum (strain 5A), this protein is Ion-translocating oxidoreductase complex subunit B.